The following is a 601-amino-acid chain: Probable sphingosine-1-phosphate lyase (601 aa).

Position 360 is an N6-(pyridoxal phosphate)lysine (Lys-360).

The protein belongs to the group II decarboxylase family. Sphingosine-1-phosphate lyase subfamily. The cofactor is pyridoxal 5'-phosphate.

It carries out the reaction sphinganine 1-phosphate = hexadecanal + phosphoethanolamine. Cleaves phosphorylated sphingoid bases (PSBs), such as sphingosine-1-phosphate, into fatty aldehydes and phosphoethanolamine. Possibly implicated in influencing the macrophage autophagy pathway. This is Probable sphingosine-1-phosphate lyase from Legionella pneumophila subsp. pneumophila (strain Philadelphia 1 / ATCC 33152 / DSM 7513).